Reading from the N-terminus, the 230-residue chain is MALYDRANSRNAYAEDSVLHESELVSFVKTTYKFFAGSLLLATVGALLGLMNFQAVVQYKWVFFIAEIVAFFGLMFSKSKPGLNLFMLFAFTSLSGVTLVPLLGMVIAKAGLGAVWQALGMTTIVFGLMSVYALKTKNDLANMGKMLFIALIVVVVCSLINLFLGSPMFQVVIAGASAILFSLYIAYDTQNIVKGMYDSPIDAAVSLYLDFLNVFISILQIIGIFSDRDK.

7 helical membrane passes run 34-54 (FFAG…MNFQ), 56-76 (VVQY…GLMF), 87-107 (MLFA…GMVI), 111-131 (GLGA…LMSV), 146-166 (MLFI…FLGS), 167-187 (PMFQ…YIAY), and 205-225 (VSLY…IGIF).

It belongs to the BI1 family.

The protein resides in the cell membrane. This is an uncharacterized protein from Helicobacter pylori (strain J99 / ATCC 700824) (Campylobacter pylori J99).